The sequence spans 23 residues: SLLQFEMMIMEVAKRSGIFWYSA.

It belongs to the phospholipase A2 family. Group II subfamily. D49 sub-subfamily. Requires Ca(2+) as cofactor. Post-translationally, contains 7 disulfide bonds. In terms of tissue distribution, expressed by the venom gland.

The protein localises to the secreted. It carries out the reaction a 1,2-diacyl-sn-glycero-3-phosphocholine + H2O = a 1-acyl-sn-glycero-3-phosphocholine + a fatty acid + H(+). Snake venom phospholipase A2 (PLA2) that shows high lipolytic (1200 umol/mg/min) and weak ADP-induced platelet aggregation activities. Also shows weak anticoagulant activity (IC(50) of about 1.0 uM). PLA2 catalyzes the calcium-dependent hydrolysis of the 2-acyl groups in 3-sn-phosphoglycerides. This Crotalus horridus (Timber rattlesnake) protein is Acidic phospholipase A2 CHA-E6b.